The primary structure comprises 677 residues: MIDQYKHQQLRIGSVSPQQISAWATKILPNGEIVGEVTKPYTFHYKTNKPEKDGLFCERIFGPIKSGICACGNYRVIGDEKEDPKFCEQCGVEFVDSRIRRYQMGYIKLACPVTHVWYLKRLPSYIANFLDKPLKELEGLVYCDFSFARPIAKKPTFLRLRGLFEYEIQSWKYSIPLFFTTQGFDTFRNREISTGAGAIREQLADLDLRTIIDYSFAEWKELGEEGSTGNEWEDRKVGRRKDFLVRRMELVKHFIRTNIEPEWMVLCLLPVLPPELRPIIQIDGGKLMSSDINELYRRVIYRNNTLTDLLSTSRSTPGELVMCQEKLVQEAVDTLLDNGIRGQPMRDGHNKVYKSFSDVIEGKEGRFRETLLGKRVDYSGRSVIVVGPSLSLHRCGLPREIAIELFQTFVIRGLIRQHLASNIGVAKRKIREKEPIVWKILQEVMQGHPVLLNRAPTLHRLGIQAFQPILVEGRAICLHPLVCKGFNADFDGDQMAVHVPLSLEAQAEARLLMFSHMNLLSPAIGDPISVPTQDMLIGLYILTSGNRRGICANRYNPWNHKTYQNERIDDTNYKSMKEPFFCNFYDAIGAYRQKRIHLDSPLWLRWQLDQRIIASKEAPIEVHYESLGTYHEIYAHYLIIRSVKKEIIDIYIRTTVGHISLYREIEEAIQGFYQACS.

Zn(2+) is bound by residues Cys69, Cys71, Cys87, and Cys90. Residues Asp489, Asp491, and Asp493 each contribute to the Mg(2+) site.

The protein belongs to the RNA polymerase beta' chain family. RpoC1 subfamily. In terms of assembly, in plastids the minimal PEP RNA polymerase catalytic core is composed of four subunits: alpha, beta, beta', and beta''. When a (nuclear-encoded) sigma factor is associated with the core the holoenzyme is formed, which can initiate transcription. Mg(2+) is required as a cofactor. Zn(2+) serves as cofactor.

The protein localises to the plastid. It is found in the chloroplast. The catalysed reaction is RNA(n) + a ribonucleoside 5'-triphosphate = RNA(n+1) + diphosphate. Functionally, DNA-dependent RNA polymerase catalyzes the transcription of DNA into RNA using the four ribonucleoside triphosphates as substrates. The sequence is that of DNA-directed RNA polymerase subunit beta' from Spinacia oleracea (Spinach).